Consider the following 75-residue polypeptide: Translation initiation factor IF-1, chloroplastic (75 aa).

Positions 1–72 constitute an S1-like domain; that stretch reads MKKQNLIHAE…TKGRIIYRLS (72 aa).

This sequence belongs to the IF-1 family. Component of the 30S ribosomal translation pre-initiation complex which assembles on the 30S ribosome in the order IF-2 and IF-3, IF-1 and N-formylmethionyl-tRNA(fMet); mRNA recruitment can occur at any time during PIC assembly.

It is found in the plastid. The protein localises to the chloroplast. One of the essential components for the initiation of protein synthesis. Stabilizes the binding of IF-2 and IF-3 on the 30S subunit to which N-formylmethionyl-tRNA(fMet) subsequently binds. Helps modulate mRNA selection, yielding the 30S pre-initiation complex (PIC). Upon addition of the 50S ribosomal subunit IF-1, IF-2 and IF-3 are released leaving the mature 70S translation initiation complex. This Pinus koraiensis (Korean pine) protein is Translation initiation factor IF-1, chloroplastic.